The chain runs to 99 residues: Class II hydrophobin 2 (99 aa).

Positions 1 to 15 are cleaved as a signal peptide; the sequence is MKFFVVAALFAGALA. 2 disulfide bridges follow: cysteine 30/cysteine 79 and cysteine 40/cysteine 70.

It belongs to the cerato-ulmin hydrophobin family. In terms of assembly, homotetramer. Further self-assembles to form highly ordered films at water-air interfaces through intermolecular interactions.

The protein localises to the secreted. It is found in the cell wall. Aerial growth, conidiation, and dispersal of filamentous fungi in the environment rely upon a capability of their secreting small amphipathic proteins called hydrophobins (HPBs) with low sequence identity. Class I can self-assemble into an outermost layer of rodlet bundles on aerial cell surfaces, conferring cellular hydrophobicity that supports fungal growth, development and dispersal; whereas Class II form highly ordered films at water-air interfaces through intermolecular interactions but contribute nothing to the rodlet structure. HYD2 is a class II hydrophobin that contributes to the fruiting body development. In Cordyceps militaris (Caterpillar fungus), this protein is Class II hydrophobin 2.